A 242-amino-acid chain; its full sequence is Type III pantothenate kinase (242 aa).

6–13 (DAGNTRIK) contacts ATP. Substrate is bound by residues Tyr90 and 97-100 (GADR). The active-site Proton acceptor is Asp99. Thr122 contributes to the ATP binding site. Thr172 contacts substrate.

This sequence belongs to the type III pantothenate kinase family. In terms of assembly, homodimer. It depends on NH4(+) as a cofactor. K(+) serves as cofactor.

It localises to the cytoplasm. The enzyme catalyses (R)-pantothenate + ATP = (R)-4'-phosphopantothenate + ADP + H(+). It participates in cofactor biosynthesis; coenzyme A biosynthesis; CoA from (R)-pantothenate: step 1/5. Functionally, catalyzes the phosphorylation of pantothenate (Pan), the first step in CoA biosynthesis. The sequence is that of Type III pantothenate kinase from Aromatoleum aromaticum (strain DSM 19018 / LMG 30748 / EbN1) (Azoarcus sp. (strain EbN1)).